Consider the following 424-residue polypeptide: MLDVKLLRTQFQEVKEKLLQRGDDLANIDRFEQLDKERRRLIAQVEELKSKRNEVSQQIAVLKREKKDAESLIAEMREVGDRIKQMDEQIRQLEEELDSLLLSIPNVPHESVPVGQSEEDNVEVRRWGEPRSFSFEPKPHWDIADQLGLLDFERAAKVAGSRFVFYKGLGARLERALINFMLDIHLDEFGYQEVLPPYLVNRASMIGTGQLPKFAEDAFHLDNEDYFLIPTAEVPVTNLHRDEILTADDLPLYYAAYSACFRAEAGSAGRDTRGLIRQHQFNKVELVKFVKPEDSYDELEKLTHQAETILQRLGLPYRVVALCTGDLGFSAAKTYDIEVWLPSYGTYREISSCSNFEAFQARRANIRFRREPKAKPEYVHTLNGSGLAIGRTVAAILENYQQEDGSVVIPGALRPYMGNRDVIR.

L-serine is bound at residue 231-233 (TAE). 262-264 (RAE) contributes to the ATP binding site. E285 is an L-serine binding site. 349-352 (EISS) is a binding site for ATP. S385 is an L-serine binding site.

Belongs to the class-II aminoacyl-tRNA synthetase family. Type-1 seryl-tRNA synthetase subfamily. In terms of assembly, homodimer. The tRNA molecule binds across the dimer.

Its subcellular location is the cytoplasm. It carries out the reaction tRNA(Ser) + L-serine + ATP = L-seryl-tRNA(Ser) + AMP + diphosphate + H(+). The enzyme catalyses tRNA(Sec) + L-serine + ATP = L-seryl-tRNA(Sec) + AMP + diphosphate + H(+). The protein operates within aminoacyl-tRNA biosynthesis; selenocysteinyl-tRNA(Sec) biosynthesis; L-seryl-tRNA(Sec) from L-serine and tRNA(Sec): step 1/1. Catalyzes the attachment of serine to tRNA(Ser). Is also able to aminoacylate tRNA(Sec) with serine, to form the misacylated tRNA L-seryl-tRNA(Sec), which will be further converted into selenocysteinyl-tRNA(Sec). This chain is Serine--tRNA ligase, found in Geobacillus thermodenitrificans (strain NG80-2).